The chain runs to 337 residues: Terpene cyclase (337 aa).

The chain crosses the membrane as a helical span at residues 5–25 (ASVIFLSLSVLAAVGVWGPFV). The N-linked (GlcNAc...) asparagine glycan is linked to asparagine 65. 7 helical membrane passes run 72–92 (IAYC…VILC), 111–131 (GLLS…MSFI), 149–169 (ALIL…LNVL), 177–197 (IWGI…ARII), 222–242 (VAGG…LGIF), 267–287 (LQVD…HELI), and 298–318 (LGGL…AAAW).

This sequence belongs to the membrane-bound ascI terpene cyclase family.

The protein resides in the membrane. Its pathway is antifungal biosynthesis. Its function is as follows. Cyclase; part of the gene cluster that mediates the biosynthesis of the tetrahydropyranyl antifungal agent lanomycin that acts as an inhibitor of CYP51 and blocks the ergosterol biosynthesis. The biosynthesis probably begins with the formation of an hexaketide, followed by methionine mediated alkylation of C-2 and C-6, and methylation of the reduced C-3 oxygen, pyran forming reductive ring closure, oxygenation of C-4, beta-keto reduction, enoyl reduction and dehydration of the remaining oxygens, and finally, acylation with glycine to complete the biosynthesis. The polypeptide is Terpene cyclase (Pyrenophora dematioidea (Helminthosporium dematioideum)).